Here is a 423-residue protein sequence, read N- to C-terminus: Endoplasmic reticulum junction formation protein lunapark (423 aa).

At 1–45 (MGALLAKWRAKPSTVEVLEKMEKDIQSLEEFRDKNQKLRKIWVAR) the chain is on the cytoplasmic side. Residues 16–40 (EVLEKMEKDIQSLEEFRDKNQKLRK) adopt a coiled-coil conformation. Residues 46-66 (LFFYSTILYILTSLTVYLWYL) form a helical membrane-spanning segment. Residues 67–77 (PDGMTARLLTM) are Lumenal-facing. The chain crosses the membrane as a helical span at residues 78 to 98 (LLFLSFPVLIWFVRTLLILWF). Over 99–423 (SRRTERNNDA…ETEESFMETE (325 aa)) the chain is Cytoplasmic. Residues 101–128 (RTERNNDALELLKTEKKKILEEVMEKET) adopt a coiled-coil conformation. The interval 147-169 (KELELPVPGPPITPRPGQDLRQR) is disordered. Thr159 carries the post-translational modification Phosphothreonine. Residues Ser177, Ser179, and Ser188 each carry the phosphoserine modification. The residue at position 198 (Thr198) is a Phosphothreonine. Residues 200 to 247 (SLQRDTSAPGGPPERSVQPTPQSNILQRRPGSPATTVSGMAIHPPGPP) are disordered. A phosphoserine mark is found at Ser206 and Ser215. The segment covering 216-225 (VQPTPQSNIL) has biased composition (polar residues). At Thr219 the chain carries Phosphothreonine. Ser222 and Ser231 each carry phosphoserine. The segment at 280-305 (CQQCFSHNGMALKEEFEYVAFRCAYC) adopts a C4-type; plays a role in ER morphology zinc-finger fold. The disordered stretch occupies residues 318–423 (APRLQEINFD…ETEESFMETE (106 aa)). Residues 334–343 (DSQGSVSSVQ) show a composition bias toward polar residues. 2 stretches are compositionally biased toward acidic residues: residues 370–391 (QAIE…DDSE) and 414–423 (ETEESFMETE).

Belongs to the lunapark family. Homodimer; homodimerization requires the C4-type zinc finger motif and decreases during mitosis in a phosphorylation-dependent manner. Phosphorylated. Phosphorylation at Thr-159 occurs during interphase. Phosphorylation at Ser-177, Ser-179, Ser-188, Thr-198, Ser-206, Ser-215, Thr-219, Ser-222 and Ser-231 occurs during mitosis; these phosphorylations reduce both its homodimerization and the ER three-way tubular junction formation.

It localises to the endoplasmic reticulum membrane. Its function is as follows. Endoplasmic reticulum (ER)-shaping membrane protein that plays a role in determining ER morphology. Involved in the stabilization of nascent three-way ER tubular junctions within the ER network. May also play a role as a curvature-stabilizing protein within three-way ER tubular junction network. The protein is Endoplasmic reticulum junction formation protein lunapark (lnpk) of Xenopus tropicalis (Western clawed frog).